A 562-amino-acid chain; its full sequence is MDSPASKKPRCERFREFFKSAKFLIYVGHALSTWGDRMWNFAVAVFLVELYGNSLLLTAVYGLVVAGSVLLLGAIIGDWVDKNPRLKVAQTSLVVQNSAVILCGALLMAVFQFKQQLSSMYDGWLLTTCYIMVISIANIANLASTAMSITIQRDWVVVVAGDDRSKLADMNATVRIIDQLTNILAPMLVGQIMAFGSHFIGCGFISGWNLFSMCLEYFLLWKVYQKTPALAFKAGQKDSDDQELKHLNIQKEIGNTESPVEASQLMTESSETKKDTGCCYQMAEPIRTFKDGWVAYYNQSIFFAGMSLAFLYMTVLGFDCITTGYAYTQGLNGSVLSLLMGASAVSGICGTVAFTWIRKKCGLIRTGFIAGVTQLSCLTLCVASVFAPGSPFDLSVSPFEEVLRHLFGDSGSLRESPTFIPTTEPPIQANVTVFEEAPPVESYMSVGLLFAGVIAARVGLWSFDLTVTQLIQENVIESERGVINGVQNSMNYLLDLLHFIMVILAPNPEAFGLLVIISVSFVAMGHMMYFRFAYKSLGSRLFLFCSPEQKPDPNIPSLPNSV.

The Cytoplasmic segment spans residues 1-20 (MDSPASKKPRCERFREFFKS). The helical transmembrane segment at 21 to 50 (AKFLIYVGHALSTWGDRMWNFAVAVFLVEL) threads the bilayer. D36 contributes to the Fe cation binding site. Residues 51-54 (YGNS) are Extracellular-facing. A helical transmembrane segment spans residues 55-81 (LLLTAVYGLVVAGSVLLLGAIIGDWVD). The Cytoplasmic segment spans residues 82-84 (KNP). The chain crosses the membrane as a helical span at residues 85 to 115 (RLKVAQTSLVVQNSAVILCGALLMAVFQFKQ). The Extracellular segment spans residues 116-123 (QLSSMYDG). A helical membrane pass occupies residues 124 to 159 (WLLTTCYIMVISIANIANLASTAMSITIQRDWVVVV). The Cytoplasmic segment spans residues 160–161 (AG). A helical transmembrane segment spans residues 162 to 192 (DDRSKLADMNATVRIIDQLTNILAPMLVGQI). At 193–199 (MAFGSHF) the chain is on the extracellular side. The chain crosses the membrane as a helical span at residues 200 to 226 (IGCGFISGWNLFSMCLEYFLLWKVYQK). The Cytoplasmic portion of the chain corresponds to 227-300 (TPALAFKAGQ…DGWVAYYNQS (74 aa)). A helical membrane pass occupies residues 301–327 (IFFAGMSLAFLYMTVLGFDCITTGYAY). C320 serves as a coordination point for Fe cation. Topologically, residues 328–332 (TQGLN) are extracellular. Residues 333–360 (GSVLSLLMGASAVSGICGTVAFTWIRKK) form a helical membrane-spanning segment. Residues 361 to 362 (CG) are Cytoplasmic-facing. The chain crosses the membrane as a helical span at residues 363–385 (LIRTGFIAGVTQLSCLTLCVASV). The Extracellular portion of the chain corresponds to 386 to 444 (FAPGSPFDLSVSPFEEVLRHLFGDSGSLRESPTFIPTTEPPIQANVTVFEEAPPVESYM). A helical membrane pass occupies residues 445-474 (SVGLLFAGVIAARVGLWSFDLTVTQLIQEN). Over 475-479 (VIESE) the chain is Cytoplasmic. A helical membrane pass occupies residues 480-504 (RGVINGVQNSMNYLLDLLHFIMVIL). Residue H498 participates in Fe cation binding. The Extracellular portion of the chain corresponds to 505-507 (APN). The helical transmembrane segment at 508–533 (PEAFGLLVIISVSFVAMGHMMYFRFA) threads the bilayer. Residues 534 to 562 (YKSLGSRLFLFCSPEQKPDPNIPSLPNSV) lie on the Cytoplasmic side of the membrane.

It belongs to the ferroportin (FP) (TC 2.A.100) family. SLC40A subfamily. Expressed in the yolk sac and placenta.

It is found in the cell membrane. Its subcellular location is the basolateral cell membrane. It carries out the reaction Fe(2+)(in) = Fe(2+)(out). Transports Fe(2+) from the inside of a cell to the outside of the cell, playing a key role for maintaining systemic iron homeostasis. May be involved in transfer of Fe(2+) between maternal and fetal circulation. The sequence is that of Solute carrier family 40 member 1 (slc40a1) from Danio rerio (Zebrafish).